The sequence spans 189 residues: dTTP/UTP pyrophosphatase (189 aa).

Catalysis depends on aspartate 71, which acts as the Proton acceptor.

Belongs to the Maf family. YhdE subfamily. A divalent metal cation is required as a cofactor.

It is found in the cytoplasm. The enzyme catalyses dTTP + H2O = dTMP + diphosphate + H(+). The catalysed reaction is UTP + H2O = UMP + diphosphate + H(+). Its function is as follows. Nucleoside triphosphate pyrophosphatase that hydrolyzes dTTP and UTP. May have a dual role in cell division arrest and in preventing the incorporation of modified nucleotides into cellular nucleic acids. This is dTTP/UTP pyrophosphatase from Pseudoalteromonas translucida (strain TAC 125).